We begin with the raw amino-acid sequence, 63 residues long: MSDHFNFNEAFNSQTMRGRANVAKATWASLGLVYVLVKMHRRNTKRRETKLYCKGCQQAMLHG.

The helical transmembrane segment at 15–37 (TMRGRANVAKATWASLGLVYVLV) threads the bilayer.

F-type ATPases have 2 components, CF(1) - the catalytic core - and CF(0) - the membrane proton channel. CF(1) has five subunits: alpha(3), beta(3), gamma(1), delta(1), epsilon(1). CF(0) has three main subunits: a, b and c. The ATP synthase complex/complex V exists as a monomeric and a dimeric supercomplex that helps shape mitochondrial cristae to optimize proton flow.

Its subcellular location is the mitochondrion membrane. Its function is as follows. Mitochondrial membrane ATP synthase (F(1)F(0) ATP synthase or Complex V) produces ATP from ADP in the presence of a proton gradient across the membrane which is generated by electron transport complexes of the respiratory chain. F-type ATPases consist of two structural domains, F(1) - containing the extramembraneous catalytic core and F(0) - containing the membrane proton channel, linked together by a central stalk and a peripheral stalk. During catalysis, ATP synthesis in the catalytic domain of F(1) is coupled via a rotary mechanism of the central stalk subunits to proton translocation. ATP5MK is a minor subunit of the mitochondrial membrane ATP synthase required for dimerization of the ATP synthase complex and as such regulates ATP synthesis in the mitochondria. The polypeptide is ATP synthase membrane subunit K, mitochondrial (Drosophila melanogaster (Fruit fly)).